An 89-amino-acid chain; its full sequence is Small ribosomal subunit protein uS15 (89 aa).

Residues 1 to 21 (MALTTEEKKQVLSEYGLHETD) are compositionally biased toward basic and acidic residues. Residues 1–24 (MALTTEEKKQVLSEYGLHETDTGS) form a disordered region.

It belongs to the universal ribosomal protein uS15 family. In terms of assembly, part of the 30S ribosomal subunit. Forms a bridge to the 50S subunit in the 70S ribosome, contacting the 23S rRNA.

Its function is as follows. One of the primary rRNA binding proteins, it binds directly to 16S rRNA where it helps nucleate assembly of the platform of the 30S subunit by binding and bridging several RNA helices of the 16S rRNA. Functionally, forms an intersubunit bridge (bridge B4) with the 23S rRNA of the 50S subunit in the ribosome. The protein is Small ribosomal subunit protein uS15 of Rhodococcus jostii (strain RHA1).